We begin with the raw amino-acid sequence, 910 residues long: E3 ubiquitin-protein ligase MARCHF6 (910 aa).

The residue at position 1 (M1) is an N-acetylmethionine. The segment at 1-62 (MDTAEEDICR…ELCKHRFAFT (62 aa)) adopts an RING-CH-type zinc-finger fold. The Cytoplasmic segment spans residues 1-91 (MDTAEEDICR…LVTSIGTAIR (91 aa)). Zn(2+) is bound by residues C9, C12, C26, C28, H36, C39, C52, and C55. The helical transmembrane segment at 92–112 (YWFHYTLVAFAWLGVVPLTAC) threads the bilayer. At 113–142 (RIYKCLFTGSVSSLLTLPLDMLSTENLLAD) the chain is on the extracellular side. A helical transmembrane segment spans residues 143–163 (CLQGCFVVTCTLCAFISLVWL). The Cytoplasmic segment spans residues 164–283 (REQIVHGGAP…WERMLGLDGS (120 aa)). A disordered region spans residues 185 to 256 (AAGHHQNEAP…AADANNGAQD (72 aa)). A compositionally biased stretch (acidic residues) spans 223 to 248 (DAQDDQAEEEEEDNEEEDDAGVEDAA). Residues 284 to 304 (LVFLEHVFWVVSLNTLFILVF) form a helical membrane-spanning segment. At 305 to 336 (AFCPYHIGHFSLVGLGFEEHVQASHFEGLITT) the chain is on the extracellular side. A helical transmembrane segment spans residues 337-357 (IVGYILLAITLIICHGLATLV). Topologically, residues 358–376 (KFHRSRRLLGVCYIVVKVS) are cytoplasmic. The helical transmembrane segment at 377–397 (LLVVVEIGVFPLICGWWLDIC) threads the bilayer. Topologically, residues 398 to 421 (SLEMFDATLKDRELSFQSAPGTTM) are extracellular. Residues 422–442 (FLHWLVGMVYVFYFASFILLL) form a helical membrane-spanning segment. The Cytoplasmic segment spans residues 443-480 (REVLRPGVLWFLRNLNDPDFNPVQEMIHLPIYRHLRRF). A helical membrane pass occupies residues 481–501 (ILSVIVFGSIVLLMLWLPIRI). The Extracellular segment spans residues 502–519 (IKSVLPNFLPYNVMLYSD). The helical transmembrane segment at 520 to 540 (APVSELSLELLLLQVVLPALL) threads the bilayer. The Cytoplasmic portion of the chain corresponds to 541–632 (EQGHTRQWLK…YRRPLNFPLR (92 aa)). Residues 633-653 (IFLLIVFMCITLLIASLICLT) traverse the membrane as a helical segment. Residues 654–678 (LPVFAGRWLMSFWTGTAKIHELYTA) lie on the Extracellular side of the membrane. A helical transmembrane segment spans residues 679–699 (ACGLYVCWLTIRAVTVMVAWM). Over 700 to 721 (PQGRRVIFQKVKEWSLMIMKTL) the chain is Cytoplasmic. The chain crosses the membrane as a helical span at residues 722 to 742 (IVAVLLAGVVPLLLGLLFELV). Residues 743–764 (IVAPLRVPLDQTPLFYPWQDWA) are Extracellular-facing. The chain crosses the membrane as a helical span at residues 765–785 (LGVLHAKIIAAITLMGPQWWL). The Cytoplasmic portion of the chain corresponds to 786–815 (KTVIEQVYANGIRNIDLHYIVRKLAAPVIS). The helical transmembrane segment at 816 to 836 (VLLLSLCVPYVIASGVVPLLG) threads the bilayer. Residues 837–848 (VTAEMQNLVHRR) lie on the Extracellular side of the membrane. Residues 849–869 (IYPFLLMVVVLMAILSFQVRQ) traverse the membrane as a helical segment. At 870–910 (FKRLYEHIKNDKYLVGQRLVNYERKSGKQGSSPPPPQSSQE) the chain is on the cytoplasmic side.

In terms of assembly, interacts with DIO2. Interacts with SQLE. Auto-ubiquitinated, which results in proteasomal degradation. Deubiquitinated by USP19; protecting MARCHF6 from p97-mediated proteasomal degradation. Present in brain (at protein level).

It localises to the endoplasmic reticulum membrane. It carries out the reaction S-ubiquitinyl-[E2 ubiquitin-conjugating enzyme]-L-cysteine + [acceptor protein]-L-lysine = [E2 ubiquitin-conjugating enzyme]-L-cysteine + N(6)-ubiquitinyl-[acceptor protein]-L-lysine.. The protein operates within protein modification; protein ubiquitination. Its function is as follows. Endoplasmic reticulum membrane-associated E3 ubiquitin ligase that plays a critical role in mitigating endoplasmic reticulum stress, the regulation of cholesterol and lipid homeostasis, and ferroptosis. Acts as a pivotal component of both the Ac/N-degron pathway (targeting the N-terminal acetyl group of substrates) and the ER-associated protein degradation-cytosol (ERAD-C) pathway (targeting misfolded substrates). For instance, mediates the degradation of Ac/N-degron-bearing proteins such as the G-protein regulator RGS2 and the lipid droplet protein PLIN2. Suppresses endoplasmic reticulum stress and ferroptosis through cytosolic POMC degradation. Prevents ferroptosis by acting as a NADPH sensor during lipid peroxidation through its C-terminal regulatory region. Facilitates also the degradation of selected endoplasmic reticulum proteins by associating with signal peptide peptidase for the turnover of endogenous tail-anchored proteins. Promotes ubiquitination of DIO2, leading to its degradation. By ubiquitinating and thereby modulating the stability of many proteins of the cholesterol pathway including SQLE, CYP51A1, CYP11A1 and HMGCR, acts as a crucial post-translational regulator of cholesterol synthesis. The chain is E3 ubiquitin-protein ligase MARCHF6 from Homo sapiens (Human).